A 959-amino-acid chain; its full sequence is Protein moonraker (959 aa).

A disordered region spans residues 124 to 156 (LPHSSHKGMHTKVERKDSKSQDVCHCSHQPSRV). Basic and acidic residues predominate over residues 134-145 (TKVERKDSKSQD). Phosphoserine is present on Ser279. Residues 456–470 (EEAPRIEDNGTDFKD) are compositionally biased toward basic and acidic residues. Disordered stretches follow at residues 456–560 (EEAP…ASPK) and 572–610 (RDAA…AESS). Residues 515-533 (PNQPYSKSRLQQTTVSSRL) are compositionally biased toward polar residues. Over residues 547 to 558 (WIPPNPTSPPAS) the composition is skewed to pro residues. A coiled-coil region spans residues 582-674 (QEDIHKESQL…TQLADKVEEA (93 aa)). Basic and acidic residues predominate over residues 583–599 (EDIHKESQLRGDAEQEA). Ser691 is modified (phosphoserine). 2 disordered regions span residues 692–721 (SVEA…SDVP) and 848–883 (LDES…PLSV). Residues 707–717 (AAAAAQPAEQA) show a composition bias toward low complexity. Residues 857-874 (GSEKREAPLPLSREDLHQ) are compositionally biased toward basic and acidic residues. The interval 877–959 (GQTPLSVPPR…FTSEFLEAAA (83 aa)) is necessary and sufficient for CEP20-binding.

In terms of assembly, interacts with CEP63 and WDR62. Forms a complex with OFD1 and CEP20/FOR20. Interacts with PCM1.

It is found in the cytoplasm. It localises to the cytoskeleton. The protein resides in the microtubule organizing center. Its subcellular location is the centrosome. The protein localises to the centriolar satellite. Its function is as follows. Involved in centriole duplication. Positively regulates CEP63 centrosomal localization. Required for WDR62 centrosomal localization and promotes the centrosomal localization of CDK2. May play a role in cilium assembly. This Mus musculus (Mouse) protein is Protein moonraker (Kiaa0753).